The sequence spans 326 residues: tRNA-modifying protein YgfZ (326 aa).

Residues Trp27 and Trp189 each coordinate folate.

It belongs to the tRNA-modifying YgfZ family.

It is found in the cytoplasm. Functionally, folate-binding protein involved in regulating the level of ATP-DnaA and in the modification of some tRNAs. It is probably a key factor in regulatory networks that act via tRNA modification, such as initiation of chromosomal replication. This chain is tRNA-modifying protein YgfZ, found in Salmonella paratyphi A (strain AKU_12601).